The primary structure comprises 71 residues: Mitochondrial import protein 1 (71 aa).

The helical transmembrane segment at 22-44 (YAAINLGLPFLNGVMLGFGEIFA) threads the bilayer.

The protein belongs to the MIM1 family. Component of the mitochondrial outer import machinery (MIM) complex containing at least mim1 and mim2. Interacts with mim2. Interacts with mitophagy receptor atg43.

It localises to the mitochondrion outer membrane. Its function is as follows. Component of the mitochondrial outer import machinery (MIM) complex that mediates transport of proteins into mitochondrial compartments. Promotes the insertion of tom70 into the outer mitochondrial membrane. Promotes the insertion of atg43 into the outer mitochondrial membrane. The MIM complex cooperates with the receptor tom70 in binding of precursor proteins and promotes their insertion and assembly into the outer membrane. Involved in import of the subset of proteins with multiple alpha-helical transmembrane segments. Required for the assembly of the TOM (translocase of outer membrane) receptor complex, which is responsible for the recognition and translocation of cytosolically synthesized mitochondrial preproteins. This chain is Mitochondrial import protein 1, found in Schizosaccharomyces pombe (strain 972 / ATCC 24843) (Fission yeast).